The sequence spans 275 residues: Dermonecrotic toxin LarSicTox-alphaIII1 (275 aa).

The active site involves His-5. Mg(2+)-binding residues include Glu-25 and Asp-27. The Nucleophile role is filled by His-41. 2 disulfides stabilise this stretch: Cys-45–Cys-51 and Cys-47–Cys-190. Asp-85 contributes to the Mg(2+) binding site. N-linked (GlcNAc...) asparagine glycosylation occurs at Asn-252.

It belongs to the arthropod phospholipase D family. Class II subfamily. Requires Mg(2+) as cofactor. In terms of tissue distribution, expressed by the venom gland.

It is found in the secreted. The enzyme catalyses an N-(acyl)-sphingosylphosphocholine = an N-(acyl)-sphingosyl-1,3-cyclic phosphate + choline. The catalysed reaction is an N-(acyl)-sphingosylphosphoethanolamine = an N-(acyl)-sphingosyl-1,3-cyclic phosphate + ethanolamine. It catalyses the reaction a 1-acyl-sn-glycero-3-phosphocholine = a 1-acyl-sn-glycero-2,3-cyclic phosphate + choline. It carries out the reaction a 1-acyl-sn-glycero-3-phosphoethanolamine = a 1-acyl-sn-glycero-2,3-cyclic phosphate + ethanolamine. Its function is as follows. Dermonecrotic toxins cleave the phosphodiester linkage between the phosphate and headgroup of certain phospholipids (sphingolipid and lysolipid substrates), forming an alcohol (often choline) and a cyclic phosphate. This toxin acts on sphingomyelin (SM). It may also act on ceramide phosphoethanolamine (CPE), lysophosphatidylcholine (LPC) and lysophosphatidylethanolamine (LPE), but not on lysophosphatidylserine (LPS), and lysophosphatidylglycerol (LPG). It acts by transphosphatidylation, releasing exclusively cyclic phosphate products as second products. Induces dermonecrosis, hemolysis, increased vascular permeability, edema, inflammatory response, and platelet aggregation. The polypeptide is Dermonecrotic toxin LarSicTox-alphaIII1 (Loxosceles arizonica (Arizona brown spider)).